A 523-amino-acid polypeptide reads, in one-letter code: Uridylate cyclase (523 aa).

2 Guanylate cyclase domains span residues 69–209 (VHVY…AKLA) and 318–438 (MSIF…IGIR). The a ribonucleoside 5'-triphosphate site is built by tyrosine 72 and arginine 125. Mn(2+) is bound by residues aspartate 323, isoleucine 324, and aspartate 372.

Belongs to the adenylyl cyclase class-4/guanylyl cyclase family. Pyrimidine cyclase subfamily. As to quaternary structure, monomer. Mn(2+) is required as a cofactor.

Its subcellular location is the cytoplasm. It catalyses the reaction UTP = 3',5'-cyclic UMP + diphosphate. In terms of biological role, pycsar (pyrimidine cyclase system for antiphage resistance) provides immunity against bacteriophage. The pyrimidine cyclase (PycC) synthesizes cyclic nucleotides in response to infection; these serve as specific second messenger signals. The signals activate the nearby effector, leading to bacterial cell death and abortive phage infection. A clade A Pycsar system. The pyrimidine cyclase gene of a two-gene Pycsar system, generates cyclic UMP (cUMP) from UTP, has little to no activity on ATP, CTP or GTP. Expression of this and effector RsPycTM (AC A0A4R2UGS4) probably confers resistance to some bacteriophage. The genes are probably only expressed in response to bacteriophage infection. The sequence is that of Uridylate cyclase from Rhizobium sp. (strain PP-F2F-G36).